We begin with the raw amino-acid sequence, 76 residues long: DNA-directed RNA polymerase subunit epsilon (76 aa).

Belongs to the RNA polymerase subunit epsilon family. In terms of assembly, RNAP is composed of a core of 2 alpha, a beta and a beta' subunit. The core is associated with a delta subunit, and at least one of epsilon or omega. When a sigma factor is associated with the core the holoenzyme is formed, which can initiate transcription.

The enzyme catalyses RNA(n) + a ribonucleoside 5'-triphosphate = RNA(n+1) + diphosphate. In terms of biological role, a non-essential component of RNA polymerase (RNAP). The polypeptide is DNA-directed RNA polymerase subunit epsilon (Streptococcus thermophilus (strain CNRZ 1066)).